We begin with the raw amino-acid sequence, 229 residues long: Flagellar L-ring protein (229 aa).

A signal peptide spans 1 to 25 (MKQVRLLPSAPVRAVCALAVAALAG). A lipid anchor (N-palmitoyl cysteine) is attached at Cys-26. Cys-26 is lipidated: S-diacylglycerol cysteine.

This sequence belongs to the FlgH family. The basal body constitutes a major portion of the flagellar organelle and consists of four rings (L,P,S, and M) mounted on a central rod.

The protein localises to the cell outer membrane. Its subcellular location is the bacterial flagellum basal body. Functionally, assembles around the rod to form the L-ring and probably protects the motor/basal body from shearing forces during rotation. The chain is Flagellar L-ring protein from Burkholderia ambifaria (strain MC40-6).